The primary structure comprises 173 residues: Large ribosomal subunit protein uL14mz (173 aa).

Residues M1–G61 constitute a mitochondrion transit peptide.

This sequence belongs to the universal ribosomal protein uL14 family. In terms of assembly, part of the mitochondrial 50S ribosomal subunit. In terms of tissue distribution, mostly expressed in leaves and inflorescences, including floral organs and meristems, and, to a lower extent, in pistils.

The protein localises to the mitochondrion. In terms of biological role, binds to 23S rRNA in mitochondrion. In Arabidopsis thaliana (Mouse-ear cress), this protein is Large ribosomal subunit protein uL14mz (HLP).